The following is a 207-amino-acid chain: MTYVVGLTGGIGSGKSTVADLFAELGVSVIDADVVARQVVEKGSPLLAEIAEHFGEEILLADGSLNRTALREKVFADESQKQWLNQLLHPAIRREMLKQLAVQRAPYCLFVVPLLIENKLTALCQRILVVDVSEQTQLERANRRDNNQLALIKNIMQSQVSRAERLKYADDVINNDEDLARNLPQLKQKVLDLHHLYLQFAEIFNER.

The DPCK domain maps to 4 to 204 (VVGLTGGIGS…HLYLQFAEIF (201 aa)). ATP is bound at residue 12-17 (GSGKST).

Belongs to the CoaE family.

The protein localises to the cytoplasm. It carries out the reaction 3'-dephospho-CoA + ATP = ADP + CoA + H(+). It functions in the pathway cofactor biosynthesis; coenzyme A biosynthesis; CoA from (R)-pantothenate: step 5/5. In terms of biological role, catalyzes the phosphorylation of the 3'-hydroxyl group of dephosphocoenzyme A to form coenzyme A. This Aggregatibacter actinomycetemcomitans (Actinobacillus actinomycetemcomitans) protein is Dephospho-CoA kinase.